Consider the following 293-residue polypeptide: Pyridoxal 5'-phosphate synthase subunit PdxS (293 aa).

D23 is a binding site for D-ribose 5-phosphate. K80 acts as the Schiff-base intermediate with D-ribose 5-phosphate in catalysis. A D-ribose 5-phosphate-binding site is contributed by G152. Residue R164 coordinates D-glyceraldehyde 3-phosphate. Residues G213 and 234 to 235 (GS) contribute to the D-ribose 5-phosphate site.

The protein belongs to the PdxS/SNZ family. In terms of assembly, in the presence of PdxT, forms a dodecamer of heterodimers.

It catalyses the reaction aldehydo-D-ribose 5-phosphate + D-glyceraldehyde 3-phosphate + L-glutamine = pyridoxal 5'-phosphate + L-glutamate + phosphate + 3 H2O + H(+). It functions in the pathway cofactor biosynthesis; pyridoxal 5'-phosphate biosynthesis. Functionally, catalyzes the formation of pyridoxal 5'-phosphate from ribose 5-phosphate (RBP), glyceraldehyde 3-phosphate (G3P) and ammonia. The ammonia is provided by the PdxT subunit. Can also use ribulose 5-phosphate and dihydroxyacetone phosphate as substrates, resulting from enzyme-catalyzed isomerization of RBP and G3P, respectively. This is Pyridoxal 5'-phosphate synthase subunit PdxS from Dehalococcoides mccartyi (strain ATCC BAA-2100 / JCM 16839 / KCTC 5957 / BAV1).